The sequence spans 184 residues: Photosystem I assembly protein Ycf4 (184 aa).

The next 2 helical transmembrane spans lie at 22–42 and 57–77; these read VCWAFILFLGSLGFLLVGTSS and IIFFPQGIVMSFYGIAGLFIS.

The protein belongs to the Ycf4 family.

It is found in the plastid. It localises to the chloroplast thylakoid membrane. In terms of biological role, seems to be required for the assembly of the photosystem I complex. This Morus indica (Mulberry) protein is Photosystem I assembly protein Ycf4.